The sequence spans 720 residues: Polyribonucleotide nucleotidyltransferase (720 aa).

Residues aspartate 484 and aspartate 490 each contribute to the Mg(2+) site. Positions proline 551 to isoleucine 610 constitute a KH domain. The 69-residue stretch at glycine 620–arginine 688 folds into the S1 motif domain. The interval proline 697 to serine 720 is disordered.

The protein belongs to the polyribonucleotide nucleotidyltransferase family. Mg(2+) serves as cofactor.

Its subcellular location is the cytoplasm. The catalysed reaction is RNA(n+1) + phosphate = RNA(n) + a ribonucleoside 5'-diphosphate. In terms of biological role, involved in mRNA degradation. Catalyzes the phosphorolysis of single-stranded polyribonucleotides processively in the 3'- to 5'-direction. In Dehalococcoides mccartyi (strain ATCC BAA-2100 / JCM 16839 / KCTC 5957 / BAV1), this protein is Polyribonucleotide nucleotidyltransferase.